Reading from the N-terminus, the 549-residue chain is Probable protein kinase UbiB (549 aa).

Positions 123 to 501 (DFDDTPLASA…QQKAHKSNYL (379 aa)) constitute a Protein kinase domain. Residues 129-137 (LASASISQV) and lysine 152 contribute to the ATP site. Aspartate 287 functions as the Proton acceptor in the catalytic mechanism. 2 helical membrane passes run 498–518 (SNYL…LLNQ) and 520–540 (ATLW…VLGW).

The protein belongs to the ABC1 family. UbiB subfamily.

It localises to the cell inner membrane. The protein operates within cofactor biosynthesis; ubiquinone biosynthesis [regulation]. Is probably a protein kinase regulator of UbiI activity which is involved in aerobic coenzyme Q (ubiquinone) biosynthesis. The polypeptide is Probable protein kinase UbiB (Shewanella pealeana (strain ATCC 700345 / ANG-SQ1)).